Here is a 301-residue protein sequence, read N- to C-terminus: Homoserine kinase (301 aa).

Lys-89–Ala-99 contributes to the ATP binding site.

The protein belongs to the GHMP kinase family. Homoserine kinase subfamily.

The protein localises to the cytoplasm. It carries out the reaction L-homoserine + ATP = O-phospho-L-homoserine + ADP + H(+). It participates in amino-acid biosynthesis; L-threonine biosynthesis; L-threonine from L-aspartate: step 4/5. In terms of biological role, catalyzes the ATP-dependent phosphorylation of L-homoserine to L-homoserine phosphate. The sequence is that of Homoserine kinase from Methanococcus maripaludis (strain DSM 14266 / JCM 13030 / NBRC 101832 / S2 / LL).